The primary structure comprises 729 residues: Phosphoribosylformylglycinamidine synthase subunit PurL (729 aa).

His42 is an active-site residue. ATP contacts are provided by Tyr45 and Lys84. Residue Glu86 participates in Mg(2+) binding. Substrate contacts are provided by residues 87-90 (SHNH) and Arg109. His88 (proton acceptor) is an active-site residue. Asp110 provides a ligand contact to Mg(2+). Gln238 is a binding site for substrate. Residue Asp266 coordinates Mg(2+). 310-312 (ESQ) contributes to the substrate binding site. Positions 492 and 529 each coordinate ATP. Asn530 provides a ligand contact to Mg(2+). Ser532 serves as a coordination point for substrate.

Belongs to the FGAMS family. Monomer. Part of the FGAM synthase complex composed of 1 PurL, 1 PurQ and 2 PurS subunits.

The protein resides in the cytoplasm. The catalysed reaction is N(2)-formyl-N(1)-(5-phospho-beta-D-ribosyl)glycinamide + L-glutamine + ATP + H2O = 2-formamido-N(1)-(5-O-phospho-beta-D-ribosyl)acetamidine + L-glutamate + ADP + phosphate + H(+). The protein operates within purine metabolism; IMP biosynthesis via de novo pathway; 5-amino-1-(5-phospho-D-ribosyl)imidazole from N(2)-formyl-N(1)-(5-phospho-D-ribosyl)glycinamide: step 1/2. Its function is as follows. Part of the phosphoribosylformylglycinamidine synthase complex involved in the purines biosynthetic pathway. Catalyzes the ATP-dependent conversion of formylglycinamide ribonucleotide (FGAR) and glutamine to yield formylglycinamidine ribonucleotide (FGAM) and glutamate. The FGAM synthase complex is composed of three subunits. PurQ produces an ammonia molecule by converting glutamine to glutamate. PurL transfers the ammonia molecule to FGAR to form FGAM in an ATP-dependent manner. PurS interacts with PurQ and PurL and is thought to assist in the transfer of the ammonia molecule from PurQ to PurL. The polypeptide is Phosphoribosylformylglycinamidine synthase subunit PurL (Campylobacter curvus (strain 525.92)).